The following is a 664-amino-acid chain: Macoilin (664 aa).

A run of 4 helical transmembrane segments spans residues 28–48 (TFLYLKFLVVWALVLLADFVL), 75–95 (AFSVFFVCVAFTSNIICLLFI), 120–140 (VCLPTVSLWILFVYIEAAIRF), and 154–174 (FAAHCIGYPVVTLGFGFKSYV). Residues 253–265 (REKGKEKDKDAKK) show a composition bias toward basic and acidic residues. Positions 253-274 (REKGKEKDKDAKKHNLGINNNN) are disordered. The residue at position 305 (Ser305) is a Phosphoserine. Polar residues predominate over residues 320-348 (KNYKNASGVVNSSPRSHSATNGSIPSSSS). The disordered stretch occupies residues 320 to 375 (KNYKNASGVVNSSPRSHSATNGSIPSSSSKNEKKQKCTSKGPSAHKDLMENCIPNN). Asn324 carries N-linked (GlcNAc...) asparagine glycosylation. Phosphoserine is present on Ser332. Asn340 and Asn452 each carry an N-linked (GlcNAc...) asparagine glycan. The interval 630-664 (TSPLSPVSPHYSSKFVETSPSGLDPNASVYQPLKK) is disordered. 2 positions are modified to phosphoserine: Ser631 and Ser634. Asn655 carries N-linked (GlcNAc...) asparagine glycosylation.

The protein belongs to the macoilin family. Strong expression in whole nervous system up to 12.5 dpc. Highly expressed in all neuronal differentiation fields from 14.5 dpc to birth, with highest expression in the telencephalic cortical plate and mitral cells in the olfactory bulb, and lower expression in neuronal progenitor zones. Progressively decreased expression in fields of neuron precursor proliferation from 14.5 dpc and virtually undetectable there by 17.5 dpc. No significant expression detected outside the nervous system. After birth, significant expression remains in the cerebellum, olfactory bulb and hippocampus.

It localises to the rough endoplasmic reticulum membrane. It is found in the nucleus membrane. Its function is as follows. Plays a role in the regulation of neuronal activity. The polypeptide is Macoilin (Maco1) (Mus musculus (Mouse)).